Consider the following 261-residue polypeptide: Indole-3-glycerol phosphate synthase (261 aa).

This sequence belongs to the TrpC family.

The enzyme catalyses 1-(2-carboxyphenylamino)-1-deoxy-D-ribulose 5-phosphate + H(+) = (1S,2R)-1-C-(indol-3-yl)glycerol 3-phosphate + CO2 + H2O. It participates in amino-acid biosynthesis; L-tryptophan biosynthesis; L-tryptophan from chorismate: step 4/5. The polypeptide is Indole-3-glycerol phosphate synthase (Burkholderia ambifaria (strain ATCC BAA-244 / DSM 16087 / CCUG 44356 / LMG 19182 / AMMD) (Burkholderia cepacia (strain AMMD))).